Reading from the N-terminus, the 278-residue chain is 2-succinyl-6-hydroxy-2,4-cyclohexadiene-1-carboxylate synthase (278 aa).

Belongs to the AB hydrolase superfamily. MenH family. As to quaternary structure, monomer.

It carries out the reaction 5-enolpyruvoyl-6-hydroxy-2-succinyl-cyclohex-3-ene-1-carboxylate = (1R,6R)-6-hydroxy-2-succinyl-cyclohexa-2,4-diene-1-carboxylate + pyruvate. It functions in the pathway quinol/quinone metabolism; 1,4-dihydroxy-2-naphthoate biosynthesis; 1,4-dihydroxy-2-naphthoate from chorismate: step 3/7. It participates in quinol/quinone metabolism; menaquinone biosynthesis. In terms of biological role, catalyzes a proton abstraction reaction that results in 2,5-elimination of pyruvate from 2-succinyl-5-enolpyruvyl-6-hydroxy-3-cyclohexene-1-carboxylate (SEPHCHC) and the formation of 2-succinyl-6-hydroxy-2,4-cyclohexadiene-1-carboxylate (SHCHC). The protein is 2-succinyl-6-hydroxy-2,4-cyclohexadiene-1-carboxylate synthase of Photorhabdus laumondii subsp. laumondii (strain DSM 15139 / CIP 105565 / TT01) (Photorhabdus luminescens subsp. laumondii).